A 218-amino-acid chain; its full sequence is Pyridoxal phosphate homeostasis protein (218 aa).

K25 carries the post-translational modification N6-(pyridoxal phosphate)lysine.

It belongs to the pyridoxal phosphate-binding protein YggS/PROSC family.

Pyridoxal 5'-phosphate (PLP)-binding protein, which is involved in PLP homeostasis. In Synechocystis sp. (strain ATCC 27184 / PCC 6803 / Kazusa), this protein is Pyridoxal phosphate homeostasis protein.